Here is a 349-residue protein sequence, read N- to C-terminus: Phosphate acetyltransferase (349 aa).

It belongs to the phosphate acetyltransferase and butyryltransferase family.

The protein localises to the cytoplasm. It carries out the reaction acetyl-CoA + phosphate = acetyl phosphate + CoA. It functions in the pathway metabolic intermediate biosynthesis; acetyl-CoA biosynthesis; acetyl-CoA from acetate: step 2/2. In Rickettsia felis (strain ATCC VR-1525 / URRWXCal2) (Rickettsia azadi), this protein is Phosphate acetyltransferase (pta).